The chain runs to 524 residues: Citrate exporter 1 (524 aa).

Residues 1 to 49 (MSSTTSSSRSDLEKVPVPQVTPRDSDSDKGSLSPEPSTLEAQSSEKPPH) form a disordered region. A compositionally biased stretch (polar residues) spans 34-45 (PEPSTLEAQSSE). The chain crosses the membrane as a helical span at residues 60 to 80 (MVCIVSLAAIFSPLSSNIYFP). N-linked (GlcNAc...) asparagine glycosylation is present at asparagine 90. The next 5 helical transmembrane spans lie at 95–115 (LATLTITVYMIVQGLAPSFWG), 125–145 (PVFIGTFIVYLVANIALAESK), 155–175 (ALQAAGSAATISIGAGVIGDI), 186–206 (GIFGGVRMLGQGIGPVFGGIF), and 215–235 (IFWFLTIAGGVSLLSILVLLP). An N-linked (GlcNAc...) asparagine glycan is attached at asparagine 244. The next 6 membrane-spanning stretches (helical) occupy residues 296-316 (VFITLFFGSIVYTVWSMVTSS), 332-352 (IGLTFLGNGFGCMSGSYLVGY), 395-415 (TWWVIAIFIVTVALYGVSLRT), 417-437 (LAVPIILQYFIAFCSTGLFTI), 459-479 (LMRCLLGAGGVAIVQPILDAL), and 481-501 (PDYTFLLLAGITLVMTPLLYV).

Belongs to the major facilitator superfamily.

The protein localises to the cell membrane. The catalysed reaction is citrate(in) = citrate(out). Its function is as follows. Transmembrane transporter that exports citrate across the cell membrane. This chain is Citrate exporter 1, found in Aspergillus niger (strain ATCC 1015 / CBS 113.46 / FGSC A1144 / LSHB Ac4 / NCTC 3858a / NRRL 328 / USDA 3528.7).